Consider the following 316-residue polypeptide: tRNA dimethylallyltransferase (316 aa).

27–34 provides a ligand contact to ATP; the sequence is GATATGKT. A substrate-binding site is contributed by 29 to 34; it reads TATGKT. Positions 52-55 are interaction with substrate tRNA; it reads DSRQ.

The protein belongs to the IPP transferase family. As to quaternary structure, monomer. Mg(2+) is required as a cofactor.

It catalyses the reaction adenosine(37) in tRNA + dimethylallyl diphosphate = N(6)-dimethylallyladenosine(37) in tRNA + diphosphate. Its function is as follows. Catalyzes the transfer of a dimethylallyl group onto the adenine at position 37 in tRNAs that read codons beginning with uridine, leading to the formation of N6-(dimethylallyl)adenosine (i(6)A). This chain is tRNA dimethylallyltransferase, found in Treponema pallidum (strain Nichols).